The chain runs to 326 residues: MDLDSMDCTSTMDVTDDEEIHQDRHSYASVSKHHHTNNNTTNVNAAASGLLPTTTSVHELLECPVCTNSMYPPIHQCHNGHTLCSTCKARVHNRCPTCRQELGDIRCLALEKVAESLELPCKHMSLGCPEIFPYYSKLKHETVCNFRPYSCPYAGSECSVTGDIPFLVAHLRDDHKVDMHSGCTFNHRYVKSNPREVENATWMLTVFHCFGQYFCLHFEAFQLGMAPVYMAFLRFMGDETEARNYNYSLEVGGYGRKLIWEGTPRSVRDSHRKVRDSHDGLIIQRNMALFFSGGDRKELKLRVTGRIWKEQQQSGEGGGACIPNLS.

The tract at residues 1–44 (MDLDSMDCTSTMDVTDDEEIHQDRHSYASVSKHHHTNNNTTNVN) is disordered. An RING-type zinc finger spans residues 63–99 (CPVCTNSMYPPIHQCHNGHTLCSTCKARVHNRCPTCR). Residues 113–306 (VAESLELPCK…KELKLRVTGR (194 aa)) form an SBD region. Residues 116–176 (SLELPCKHMS…LVAHLRDDHK (61 aa)) form an SIAH-type zinc finger. Zn(2+) is bound by residues Cys-121, Cys-128, His-140, Cys-144, Cys-151, Cys-158, His-170, and His-175.

Belongs to the SINA (Seven in absentia) family. As to quaternary structure, interacts with SINAT6. Interacts with WAV3. Interacts with FREE1. Interacts with ELC/VPS23A.

It localises to the endosome. It is found in the multivesicular body. The protein resides in the cytoplasmic vesicle. The protein localises to the autophagosome. It carries out the reaction S-ubiquitinyl-[E2 ubiquitin-conjugating enzyme]-L-cysteine + [acceptor protein]-L-lysine = [E2 ubiquitin-conjugating enzyme]-L-cysteine + N(6)-ubiquitinyl-[acceptor protein]-L-lysine.. It participates in protein modification; protein ubiquitination. E3 ubiquitin-protein ligase that mediates ubiquitination and subsequent proteasomal degradation of target proteins. E3 ubiquitin ligases accept ubiquitin from an E2 ubiquitin-conjugating enzyme in the form of a thioester and then directly transfers the ubiquitin to targeted substrates. It probably triggers the ubiquitin-mediated degradation of different substrates. Modulates directly the ubiquitination and proteasomal-dependent degradation of FREE1, a component of the ESCRT-I complex. Modulates directly the ubiquitination and proteasomal-dependent degradation of ELC/VPS23A, a component of the ESCRT-I complex. This chain is E3 ubiquitin-protein ligase SINAT3, found in Arabidopsis thaliana (Mouse-ear cress).